Reading from the N-terminus, the 234-residue chain is 1-(5-phosphoribosyl)-5-[(5-phosphoribosylamino)methylideneamino] imidazole-4-carboxamide isomerase (234 aa).

Asp-8 acts as the Proton acceptor in catalysis. Asp-128 serves as the catalytic Proton donor.

This sequence belongs to the HisA/HisF family.

It is found in the cytoplasm. The enzyme catalyses 1-(5-phospho-beta-D-ribosyl)-5-[(5-phospho-beta-D-ribosylamino)methylideneamino]imidazole-4-carboxamide = 5-[(5-phospho-1-deoxy-D-ribulos-1-ylimino)methylamino]-1-(5-phospho-beta-D-ribosyl)imidazole-4-carboxamide. Its pathway is amino-acid biosynthesis; L-histidine biosynthesis; L-histidine from 5-phospho-alpha-D-ribose 1-diphosphate: step 4/9. This chain is 1-(5-phosphoribosyl)-5-[(5-phosphoribosylamino)methylideneamino] imidazole-4-carboxamide isomerase, found in Cenarchaeum symbiosum (strain A).